Consider the following 163-residue polypeptide: Homoaconitase small subunit (163 aa).

The protein belongs to the LeuD family. Heterodimer of HacA and HacB.

The enzyme catalyses (2R,3S)-homoisocitrate = cis-homoaconitate + H2O. Its pathway is amino-acid biosynthesis; L-lysine biosynthesis via AAA pathway; L-alpha-aminoadipate from 2-oxoglutarate: step 3/5. With respect to regulation, is not inhibited by lysine. Its function is as follows. Catalyzes the reversible hydration of cis-homoaconitate ((Z)-but-1-ene-1,2,4-tricarboxylate) to homoisocitrate ((1R,2S)-1-hydroxybutane-1,2,4-tricarboxylate). Can catalyze neither the dehydration of (R)-homocitrate ((2R)-2-hydroxybutane-1,2,4-tricarboxylate) into cis-homoaconitate in vitro, nor the reverse reaction. Is not active toward (S)-homocitrate, cis-aconitate or citrate as substrate. This Thermus thermophilus (strain ATCC BAA-163 / DSM 7039 / HB27) protein is Homoaconitase small subunit (hacB).